The chain runs to 501 residues: Beta-secretase 1 (501 aa).

Residues 1-21 form the signal peptide; the sequence is MAQALPWLLLWMGSGVLPAHG. The propeptide occupies 22–45; sequence SQPGIRLPLRSGLGGAPLGLRLPR. Over 22–457 the chain is Extracellular; it reads SQPGIRLPLR…PQTDESTLMT (436 aa). The disordered stretch occupies residues 39-58; the sequence is LGLRLPRETDEESEEPGRRG. In terms of domain architecture, Peptidase A1 spans 75–416; that stretch reads YYVEMTLGSP…DRARKRIGFA (342 aa). The active site involves aspartate 93. Lysine 126 carries the N6-acetyllysine modification. N-linked (GlcNAc...) asparagine glycans are attached at residues asparagine 153, asparagine 172, and asparagine 223. 3 disulfide bridges follow: cysteine 216-cysteine 420, cysteine 278-cysteine 443, and cysteine 330-cysteine 380. An N6-acetyllysine mark is found at lysine 275, lysine 279, and lysine 285. The active site involves aspartate 289. Residues lysine 299, lysine 300, and lysine 307 each carry the N6-acetyllysine modification. Asparagine 354 carries an N-linked (GlcNAc...) asparagine glycan. A helical transmembrane segment spans residues 458 to 478; sequence IAYVMAAICALFMLPLCLMVC. 4 S-palmitoyl cysteine lipidation sites follow: cysteine 474, cysteine 478, cysteine 482, and cysteine 485. Residues 479–501 are Cytoplasmic-facing; sequence QWRCLRCLRHQHDDFADDISLLK. The tract at residues 479–501 is interaction with RTN3; it reads QWRCLRCLRHQHDDFADDISLLK. The DXXLL signature appears at 496 to 500; it reads DISLL. A Phosphoserine modification is found at serine 498. Residue lysine 501 forms a Glycyl lysine isopeptide (Lys-Gly) (interchain with G-Cter in ubiquitin) linkage.

Belongs to the peptidase A1 family. Monomer. Interacts (via DXXLL motif) with GGA1, GGA2 and GGA3 (via their VHS domain); the interaction highly increases when BACE1 is phosphorylated at Ser-498. Interacts with RTN1; RTN2; RTN3 and RTN4; the interaction leads to inhibition of amyloid precursor protein processing. Interacts with SNX6. Interacts with PCSK9. Interacts with NAT8 and NAT8B. Interacts with BIN1. Interacts (via extracellular domain) with ADAM10 (via extracellular domain). Interacts with SORL1; this interaction may affect binding with APP and hence reduce APP cleavage. Interacts with NRDC AND NRG1. Palmitoylation mediates lipid raft localization. In terms of processing, acetylated in the endoplasmic reticulum at Lys-126, Lys-275, Lys-279, Lys-285, Lys-299, Lys-300 and Lys-307. Acetylation by NAT8 and NAT8B is transient and deacetylation probably occurs in the Golgi. Acetylation regulates the maturation, the transport to the plasma membrane, the stability and the expression of the protein. Post-translationally, ubiquitinated at Lys-501, ubiquitination leads to lysosomal degradation. Monoubiquitinated and 'Lys-63'-linked polyubitinated. Deubiquitnated by USP8; inhibits lysosomal degradation. Phosphorylation at Ser-498 is required for interaction with GGA1 and retrograded transport from endosomal compartments to the trans-Golgi network. Non-phosphorylated BACE1 enters a direct recycling route to the cell surface. In terms of processing, N-Glycosylated. Addition of a bisecting N-acetylglucosamine by MGAT3 blocks lysosomal targeting, further degradation and is required for maintaining stability under stress conditions.

The protein resides in the cell membrane. It is found in the golgi apparatus. Its subcellular location is the trans-Golgi network. The protein localises to the endoplasmic reticulum. It localises to the endosome. The protein resides in the cell surface. It is found in the cytoplasmic vesicle membrane. Its subcellular location is the membrane raft. The protein localises to the lysosome. It localises to the late endosome. The protein resides in the early endosome. It is found in the recycling endosome. Its subcellular location is the cell projection. The protein localises to the axon. It localises to the dendrite. The catalysed reaction is Broad endopeptidase specificity. Cleaves Glu-Val-Asn-Leu-|-Asp-Ala-Glu-Phe in the Swedish variant of Alzheimer's amyloid precursor protein.. Inhibited by RTN3 and RTN4. Its function is as follows. Responsible for the proteolytic processing of the amyloid precursor protein (APP). Cleaves at the N-terminus of the A-beta peptide sequence, between residues 671 and 672 of APP, leads to the generation and extracellular release of beta-cleaved soluble APP, and a corresponding cell-associated C-terminal fragment which is later released by gamma-secretase. Cleaves CHL1. The chain is Beta-secretase 1 (BACE1) from Bos taurus (Bovine).